Reading from the N-terminus, the 225-residue chain is Type II restriction enzyme BslI subunit alpha (225 aa).

2 consecutive C4-type zinc fingers follow at residues 36–53 (CKDCGQYWHTSLSECYFC) and 63–84 (CNSCGKKYSLTSSSKSCDTDGC).

Heterotetramer of two alpha and two beta subunits. The alpha subunit is believed to be responsible for DNA recognition, while the beta subunit is thought to mediate cleavage. It depends on Zn(2+) as a cofactor.

The catalysed reaction is Endonucleolytic cleavage of DNA to give specific double-stranded fragments with terminal 5'-phosphates.. A P subtype restriction enzyme that recognizes the double-stranded sequence 5'-CCN(7)GG-3' and cleaves after N-7. The protein is Type II restriction enzyme BslI subunit alpha of Bacillus sp. (strain NEB-606).